Consider the following 91-residue polypeptide: Small ribosomal subunit protein uS15 (91 aa).

Belongs to the universal ribosomal protein uS15 family. As to quaternary structure, part of the 30S ribosomal subunit. Forms a bridge to the 50S subunit in the 70S ribosome, contacting the 23S rRNA.

Functionally, one of the primary rRNA binding proteins, it binds directly to 16S rRNA where it helps nucleate assembly of the platform of the 30S subunit by binding and bridging several RNA helices of the 16S rRNA. Forms an intersubunit bridge (bridge B4) with the 23S rRNA of the 50S subunit in the ribosome. The polypeptide is Small ribosomal subunit protein uS15 (Synechococcus sp. (strain JA-2-3B'a(2-13)) (Cyanobacteria bacterium Yellowstone B-Prime)).